The following is a 79-amino-acid chain: DNA-directed RNA polymerase subunit omega (79 aa).

Belongs to the RNA polymerase subunit omega family. As to quaternary structure, the RNAP catalytic core consists of 2 alpha, 1 beta, 1 beta' and 1 omega subunit. When a sigma factor is associated with the core the holoenzyme is formed, which can initiate transcription.

The enzyme catalyses RNA(n) + a ribonucleoside 5'-triphosphate = RNA(n+1) + diphosphate. Functionally, promotes RNA polymerase assembly. Latches the N- and C-terminal regions of the beta' subunit thereby facilitating its interaction with the beta and alpha subunits. The protein is DNA-directed RNA polymerase subunit omega of Thermotoga petrophila (strain ATCC BAA-488 / DSM 13995 / JCM 10881 / RKU-1).